The following is a 238-amino-acid chain: Ribonuclease PH (238 aa).

Phosphate-binding positions include R86 and 124 to 126 (GTR).

It belongs to the RNase PH family. Homohexameric ring arranged as a trimer of dimers.

It catalyses the reaction tRNA(n+1) + phosphate = tRNA(n) + a ribonucleoside 5'-diphosphate. Phosphorolytic 3'-5' exoribonuclease that plays an important role in tRNA 3'-end maturation. Removes nucleotide residues following the 3'-CCA terminus of tRNAs; can also add nucleotides to the ends of RNA molecules by using nucleoside diphosphates as substrates, but this may not be physiologically important. Probably plays a role in initiation of 16S rRNA degradation (leading to ribosome degradation) during starvation. In Chromobacterium violaceum (strain ATCC 12472 / DSM 30191 / JCM 1249 / CCUG 213 / NBRC 12614 / NCIMB 9131 / NCTC 9757 / MK), this protein is Ribonuclease PH.